The sequence spans 269 residues: Dynein regulatory complex protein 8 (269 aa).

The interval methionine 1 to serine 113 is disordered. The span at alanine 54–alanine 76 shows a compositional bias: low complexity. EF-hand domains lie at glutamate 150 to cysteine 185 and isoleucine 228 to valine 263.

This sequence belongs to the DRC8 family. Component of the nexin-dynein regulatory complex (N-DRC).

The protein localises to the cytoplasm. It localises to the cytoskeleton. Its subcellular location is the flagellum axoneme. Its function is as follows. Component of the nexin-dynein regulatory complex (N-DRC), a key regulator of ciliary/flagellar motility which maintains the alignment and integrity of the distal axoneme and regulates microtubule sliding in motile axonemes. The polypeptide is Dynein regulatory complex protein 8 (EFCAB2) (Homo sapiens (Human)).